A 638-amino-acid polypeptide reads, in one-letter code: Chaperone protein DnaK (638 aa).

Thr198 bears the Phosphothreonine; by autocatalysis mark. Residues 602-638 (QAKSQAQGGEEAQAKDAGQSNDDVVDAEFEEVKDDKK) form a disordered region. Positions 624 to 638 (DVVDAEFEEVKDDKK) are enriched in acidic residues.

The protein belongs to the heat shock protein 70 family.

Its function is as follows. Acts as a chaperone. The polypeptide is Chaperone protein DnaK (Shewanella denitrificans (strain OS217 / ATCC BAA-1090 / DSM 15013)).